A 320-amino-acid chain; its full sequence is Malate dehydrogenase (320 aa).

Residues 10–15 (GAGQIG) and aspartate 34 contribute to the NAD(+) site. Substrate is bound by residues arginine 83 and arginine 89. NAD(+) contacts are provided by residues asparagine 96 and 119–121 (ITN). 2 residues coordinate substrate: asparagine 121 and arginine 152. The active-site Proton acceptor is the histidine 176.

Belongs to the LDH/MDH superfamily. MDH type 3 family.

It carries out the reaction (S)-malate + NAD(+) = oxaloacetate + NADH + H(+). In terms of biological role, catalyzes the reversible oxidation of malate to oxaloacetate. This is Malate dehydrogenase from Methylobacterium radiotolerans (strain ATCC 27329 / DSM 1819 / JCM 2831 / NBRC 15690 / NCIMB 10815 / 0-1).